Reading from the N-terminus, the 284-residue chain is MTLNFPLLLVIAVAVCGALALVDLVLFAPRRRAAISSYEGQVNEPDPAVLEKLNKEPLLVEYGKSFFPVLFIVLVLRSFLVEPFQIPSGSMKPTLEVGDFILVNKFAYGIRLPVLDTKVIPIGDPQRGDVMVFRYPSEPNINYIKRVVGLPGDTVRYTKEKRLYVNGELVAEKLVGEEPGTLGSVTLYQEKLGQAEHLIRKEMSRYRIEPDRQWTIPAGHYFMMGDNRDNSNDSRYWNDPKIPKDLLGMVPDRNIVGKAFAVWMSWPDPKMSNLPNFSRVGVIH.

The chain crosses the membrane as a helical span at residues 4-22; sequence NFPLLLVIAVAVCGALALV. The Cytoplasmic portion of the chain corresponds to 23 to 58; the sequence is DLVLFAPRRRAAISSYEGQVNEPDPAVLEKLNKEPL. The chain crosses the membrane as a helical span at residues 59–77; that stretch reads LVEYGKSFFPVLFIVLVLR. At 78–284 the chain is on the periplasmic side; that stretch reads SFLVEPFQIP…PNFSRVGVIH (207 aa). Catalysis depends on residues S90 and K145.

This sequence belongs to the peptidase S26 family.

The protein resides in the cell inner membrane. The enzyme catalyses Cleavage of hydrophobic, N-terminal signal or leader sequences from secreted and periplasmic proteins.. The polypeptide is Signal peptidase I (lepB) (Pseudomonas aeruginosa (strain ATCC 15692 / DSM 22644 / CIP 104116 / JCM 14847 / LMG 12228 / 1C / PRS 101 / PAO1)).